The sequence spans 355 residues: Zinc transporter ZIP13 homolog (355 aa).

Asparagine 4 is a glycosylation site (N-linked (GlcNAc...) asparagine). The next 3 helical transmembrane spans lie at 37–57 (VFSL…LIII), 79–99 (VLLS…LLPE), and 118–138 (LWVL…SGYA). Asparagine 218 carries N-linked (GlcNAc...) asparagine glycosylation. Helical transmembrane passes span 273-293 (LLTA…SGVT) and 301-321 (SWIM…TVLP).

It belongs to the ZIP transporter (TC 2.A.5) family. KE4/Catsup subfamily.

It is found in the basolateral cell membrane. The protein localises to the golgi apparatus membrane. Its function is as follows. Involved in zinc transport and homeostasis. This is Zinc transporter ZIP13 homolog (Zip99C) from Drosophila melanogaster (Fruit fly).